Consider the following 180-residue polypeptide: Small ribosomal subunit protein uS5 (180 aa).

Positions 24-87 constitute an S5 DRBM domain; that stretch reads MIEKLVAVNR…EQARKNLVSV (64 aa).

This sequence belongs to the universal ribosomal protein uS5 family. In terms of assembly, part of the 30S ribosomal subunit. Contacts proteins S4 and S8.

Functionally, with S4 and S12 plays an important role in translational accuracy. Located at the back of the 30S subunit body where it stabilizes the conformation of the head with respect to the body. The protein is Small ribosomal subunit protein uS5 of Stenotrophomonas maltophilia (strain R551-3).